Here is a 446-residue protein sequence, read N- to C-terminus: DNA repair protein RadA (446 aa).

The C4-type zinc finger occupies 10 to 27 (CQACGNQQSKWLGKCPDC). An ATP-binding site is contributed by 96 to 103 (GSPGVGKS). Residues 253 to 257 (KNRFG) carry the RadA KNRFG motif motif. A lon-protease-like region spans residues 349-446 (DVFVNISGGV…KELSQVLEWM (98 aa)).

The protein belongs to the RecA family. RadA subfamily.

In terms of biological role, DNA-dependent ATPase involved in processing of recombination intermediates, plays a role in repairing DNA breaks. Stimulates the branch migration of RecA-mediated strand transfer reactions, allowing the 3' invading strand to extend heteroduplex DNA faster. Binds ssDNA in the presence of ADP but not other nucleotides, has ATPase activity that is stimulated by ssDNA and various branched DNA structures, but inhibited by SSB. Does not have RecA's homology-searching function. The sequence is that of DNA repair protein RadA from Campylobacter jejuni subsp. jejuni serotype O:2 (strain ATCC 700819 / NCTC 11168).